A 655-amino-acid polypeptide reads, in one-letter code: Broad substrate specificity ATP-binding cassette transporter ABCG2 (655 aa).

The Cytoplasmic segment spans residues 1–395 (MSSSNVEVFI…KNLLGNPQAS (395 aa)). An ABC transporter domain is found at 37-286 (LSFHNICYRV…FESAGYHCEA (250 aa)). Residues 80-87 (GPTGGGKS), 184-190 (RGVSGGE), Glu211, and His243 each bind ATP. Thr362 is modified (phosphothreonine; by PIM1). The ABC transmembrane type-2 domain occupies 389–651 (LGNPQASIAQ…TIAYLKLLFL (263 aa)). A helical membrane pass occupies residues 396–416 (IAQIIVTVVLGLVIGAIYFGL). The Extracellular segment spans residues 417 to 428 (KNDSTGIQNRAG). The helical transmembrane segment at 429–449 (VLFFLTTNQCFSSVSAVELFV) threads the bilayer. The Cytoplasmic portion of the chain corresponds to 450–477 (VEKKLFIHEYISGYYRVSSYFLGKLLSD). A helical transmembrane segment spans residues 478 to 498 (LLPMRMLPSIIFTCIVYFMLG). Residues 499–506 (LKPKADAF) lie on the Extracellular side of the membrane. A helical transmembrane segment spans residues 507-527 (FVMMFTLMMVAYSASSMALAI). The Cytoplasmic portion of the chain corresponds to 528–535 (AAGQSVVS). A helical membrane pass occupies residues 536–556 (VATLLMTICFVFMMIFSGLLV). Topologically, residues 557 to 630 (NLTTIASWLS…LSPWGLWKNH (74 aa)) are extracellular. Cys592 and Cys608 are joined by a disulfide. Asn596 is a glycosylation site (N-linked (GlcNAc...) asparagine). Residues 631–651 (VALACMIVIFLTIAYLKLLFL) traverse the membrane as a helical segment. The Cytoplasmic portion of the chain corresponds to 652–655 (KKYS).

This sequence belongs to the ABC transporter superfamily. ABCG family. Eye pigment precursor importer (TC 3.A.1.204) subfamily. In terms of assembly, homodimer; disulfide-linked. The minimal functional unit is a homodimer, but the major oligomeric form in plasma membrane is a homotetramer with possibility of higher order oligomerization up to homododecamers. N-glycosylated. Glycosylation-deficient ABCG2 is normally expressed and functional. In terms of processing, phosphorylated. Phosphorylation at Thr-362 by PIM1 is induced by drugs like mitoxantrone and is associated with cells increased drug resistance. It regulates the localization to the plasma membrane, the homooligomerization and therefore, the activity of the transporter. In terms of tissue distribution, highly expressed in placenta. Low expression in small intestine, liver and colon. Expressed in brain (at protein level).

It is found in the cell membrane. The protein localises to the apical cell membrane. The protein resides in the mitochondrion membrane. The catalysed reaction is ATP + H2O + xenobioticSide 1 = ADP + phosphate + xenobioticSide 2.. It carries out the reaction urate(in) + ATP + H2O = urate(out) + ADP + phosphate + H(+). The enzyme catalyses indoxyl sulfate(in) + ATP + H2O = indoxyl sulfate(out) + ADP + phosphate + H(+). It catalyses the reaction sphing-4-enine 1-phosphate(in) + ATP + H2O = sphing-4-enine 1-phosphate(out) + ADP + phosphate + H(+). The catalysed reaction is estrone 3-sulfate(in) + ATP + H2O = estrone 3-sulfate(out) + ADP + phosphate + H(+). It carries out the reaction dehydroepiandrosterone 3-sulfate(in) + ATP + H2O = dehydroepiandrosterone 3-sulfate(out) + ADP + phosphate + H(+). The enzyme catalyses 4-methylumbelliferone sulfate(in) + ATP + H2O = 4-methylumbelliferone sulfate(out) + ADP + phosphate + H(+). It catalyses the reaction 5,7-dimethyl-2-methylamino-4-(3-pyridylmethyl)-1,3-benzothiazol-6-yl beta-D-glucuronate(in) + ATP + H2O = 5,7-dimethyl-2-methylamino-4-(3-pyridylmethyl)-1,3-benzothiazol-6-yl beta-D-glucuronate(out) + ADP + phosphate + H(+). The catalysed reaction is 4-methylumbelliferone beta-D-glucuronate(in) + ATP + H2O = 4-methylumbelliferone beta-D-glucuronate(out) + ADP + phosphate + H(+). It carries out the reaction 5,7-dimethyl-2-methylamino-4-(3-pyridylmethyl)-1,3-benzothiazol-6-yl sulfate(in) + ATP + H2O = 5,7-dimethyl-2-methylamino-4-(3-pyridylmethyl)-1,3-benzothiazol-6-yl sulfate(out) + ADP + phosphate + H(+). The enzyme catalyses 17beta-estradiol 17-O-(beta-D-glucuronate)(in) + ATP + H2O = 17beta-estradiol 17-O-(beta-D-glucuronate)(out) + ADP + phosphate + H(+). It catalyses the reaction methotrexate(in) + ATP + H2O = methotrexate(out) + ADP + phosphate + H(+). The catalysed reaction is riboflavin(in) + ATP + H2O = riboflavin(out) + ADP + phosphate + H(+). It carries out the reaction pheophorbide a(in) + ATP + H2O = pheophorbide a(out) + ADP + phosphate + H(+). The enzyme catalyses itaconate(in) + ATP + H2O = itaconate(out) + ADP + phosphate + H(+). Its activity is regulated as follows. Specifically inhibited by the fungal toxin fumitremorgin C and Ko143. In terms of biological role, broad substrate specificity ATP-dependent transporter of the ATP-binding cassette (ABC) family that actively extrudes a wide variety of physiological compounds, dietary toxins and xenobiotics from cells. Involved in porphyrin homeostasis, mediating the export of protoporphyrin IX (PPIX) from both mitochondria to cytosol and cytosol to extracellular space, it also functions in the cellular export of heme. Also mediates the efflux of sphingosine-1-P from cells. Acts as a urate exporter functioning in both renal and extrarenal urate excretion. In kidney, it also functions as a physiological exporter of the uremic toxin indoxyl sulfate. Also involved in the excretion of steroids like estrone 3-sulfate/E1S, 3beta-sulfooxy-androst-5-en-17-one/DHEAS, and other sulfate conjugates. Mediates the secretion of the riboflavin and biotin vitamins into milk. Extrudes pheophorbide a, a phototoxic porphyrin catabolite of chlorophyll, reducing its bioavailability. Plays an important role in the exclusion of xenobiotics from the brain. It confers to cells a resistance to multiple drugs and other xenobiotics including mitoxantrone, pheophorbide, camptothecin, methotrexate, azidothymidine, and the anthracyclines daunorubicin and doxorubicin, through the control of their efflux. In placenta, it limits the penetration of drugs from the maternal plasma into the fetus. May play a role in early stem cell self-renewal by blocking differentiation. In inflammatory macrophages, exports itaconate from the cytosol to the extracellular compartment and limits the activation of TFEB-dependent lysosome biogenesis involved in antibacterial innate immune response. This Homo sapiens (Human) protein is Broad substrate specificity ATP-binding cassette transporter ABCG2 (ABCG2).